The chain runs to 94 residues: Small ribosomal subunit protein bS6 (94 aa).

The protein belongs to the bacterial ribosomal protein bS6 family.

In terms of biological role, binds together with bS18 to 16S ribosomal RNA. The protein is Small ribosomal subunit protein bS6 of Fusobacterium nucleatum subsp. nucleatum (strain ATCC 25586 / DSM 15643 / BCRC 10681 / CIP 101130 / JCM 8532 / KCTC 2640 / LMG 13131 / VPI 4355).